We begin with the raw amino-acid sequence, 378 residues long: UPF0754 membrane protein BC_0879 (378 aa).

The chain crosses the membrane as a helical span at residues 357–377 (YLGALLGGMIGLVQGLLLLFL).

This sequence belongs to the UPF0754 family.

It is found in the cell membrane. This chain is UPF0754 membrane protein BC_0879, found in Bacillus cereus (strain ATCC 14579 / DSM 31 / CCUG 7414 / JCM 2152 / NBRC 15305 / NCIMB 9373 / NCTC 2599 / NRRL B-3711).